A 1132-amino-acid polypeptide reads, in one-letter code: Mis18-binding protein 1 (1132 aa).

A Glycyl lysine isopeptide (Lys-Gly) (interchain with G-Cter in SUMO2) cross-link involves residue K7. A Phosphoserine modification is found at S9. K65 is covalently cross-linked (Glycyl lysine isopeptide (Lys-Gly) (interchain with G-Cter in SUMO2)). S110, S131, S135, S172, and S192 each carry phosphoserine. Residues 123–154 form a disordered region; that stretch reads LRDKQEQPSRNSSLLEPQKSGNNETFTPNRVE. Residues 130–150 are compositionally biased toward polar residues; it reads PSRNSSLLEPQKSGNNETFTP. Residues K211 and K262 each participate in a glycyl lysine isopeptide (Lys-Gly) (interchain with G-Cter in SUMO2) cross-link. S299 is subject to Phosphoserine. The segment at 306-332 is disordered; sequence SERTTEGTSQQKVKEGNGKTVPGETGL. S365 bears the Phosphoserine mark. The region spanning 383–469 is the SANTA domain; sequence VQLQEWMIKS…MFGFPENWKE (87 aa). Residues 482–518 form a disordered region; that stretch reads EKNREKTKQKQKTGRSVRDIRKSMKNDARENQTDTAQ. The span at 497-513 shows a compositional bias: basic and acidic residues; sequence SVRDIRKSMKNDARENQ. Residues K534, K612, K639, and K647 each participate in a glycyl lysine isopeptide (Lys-Gly) (interchain with G-Cter in SUMO2) cross-link. Position 653 is a phosphothreonine (T653). Glycyl lysine isopeptide (Lys-Gly) (interchain with G-Cter in SUMO2) cross-links involve residues K727 and K742. The disordered stretch occupies residues 765 to 798; it reads HQSSPDLSSEESETEKEIKRKAEVKKTKAGNTKE. Residues S772 and S773 each carry the phosphoserine modification. A compositionally biased stretch (basic and acidic residues) spans 779–790; the sequence is EKEIKRKAEVKK. T821 carries the post-translational modification Phosphothreonine. A Phosphoserine modification is found at S824. K840 is covalently cross-linked (Glycyl lysine isopeptide (Lys-Gly) (interchain with G-Cter in SUMO2)). Phosphoserine is present on S860. The 56-residue stretch at 875–930 folds into the SANT domain; sequence IQDKEWNEKELQKLHCAFASLPKHKPGFWSEVAAAVGSRSPEECQRKYMENPRGKG. A Glycyl lysine isopeptide (Lys-Gly) (interchain with G-Cter in SUMO2) cross-link involves residue K899. The segment at 923–957 is disordered; that stretch reads MENPRGKGSQKHVTKKKPANSKGQNGKRGDADQKQ. Residues 930-941 show a composition bias toward basic residues; it reads GSQKHVTKKKPA. Residues K956, K964, and K983 each participate in a glycyl lysine isopeptide (Lys-Gly) (interchain with G-Cter in SUMO2) cross-link. At S1008 the chain carries Phosphoserine. K1079 is covalently cross-linked (Glycyl lysine isopeptide (Lys-Gly) (interchain with G-Cter in SUMO2)). The residue at position 1086 (S1086) is a Phosphoserine. T1087 and T1089 each carry phosphothreonine. Residues S1104 and S1116 each carry the phosphoserine modification.

Interacts with SP1. Interacts with MIS18A. Identified in a complex containing MIS18A, OIP5/MIS18B, MIS18BP1, RBBP7 and RBBP4. Interacts with KAT7/HBO1. Interacts (via N-terminus) with FLNA (via N-terminus).

The protein resides in the nucleus. It localises to the chromosome. The protein localises to the centromere. Its function is as follows. Required for recruitment of CENPA to centromeres and normal chromosome segregation during mitosis. The chain is Mis18-binding protein 1 (MIS18BP1) from Homo sapiens (Human).